A 501-amino-acid polypeptide reads, in one-letter code: MSNFPWLTTIVLLPVFAGCVIPFFPNKGNNLIRWYTLGVCLLEFLLITYVFCYYFKFDDPIIQLKEDYNWIDFLDFHWRLGIDGLSIGLILLTGFITTLATLAAWPVTRNPRLFYFLMLAMYSGQVGLFASQDILLFFFMWELELIPVYLLLCIWGGKRRLYATTKFILYTAGGSIFILMGALTMGFYGSNQLTLDFQNLSNKSYPLELEIILYLGFFIAYAVKLPIFPLHTWLPDTHGEAHYSTCMLLAGILLKMGGYGLIRINMELLPHAHSIFAPWIVAVGAIQIVYAALISFSQRNLKRRIAYSSISHMGFVLIGIGSMTDVGLNGAILQMVSHGLIGAALFFLAGITYDRTRTLFLDQMGGTAIYMPKIFTMFSSFSMASLALPGMSGFVAEFLVFLGIVVSNKYSFNFKILVTIIEAIGIILTPIYLLSMLRQMFYGYKFSKFTTFSNSNMDAGPREIFILVCLIFPIVGIGLYPNSVLSLWNSKVSFILSKFIV.

Transmembrane regions (helical) follow at residues 4–24 (FPWL…IPFF), 35–55 (YTLG…CYYF), 87–107 (IGLI…AWPV), 113–133 (LFYF…ASQD), 134–154 (ILLF…LLCI), 167–187 (FILY…TMGF), 211–231 (IILY…FPLH), 242–262 (HYST…YGLI), 274–294 (SIFA…AALI), 310–330 (ISHM…GLNG), 331–351 (AILQ…LAGI), 386–406 (LALP…GIVV), 416–436 (ILVT…LLSM), and 464–484 (IFIL…PNSV).

The protein belongs to the complex I subunit 4 family.

Its subcellular location is the plastid. It is found in the chloroplast thylakoid membrane. It carries out the reaction a plastoquinone + NADH + (n+1) H(+)(in) = a plastoquinol + NAD(+) + n H(+)(out). It catalyses the reaction a plastoquinone + NADPH + (n+1) H(+)(in) = a plastoquinol + NADP(+) + n H(+)(out). The protein is NAD(P)H-quinone oxidoreductase chain 4, chloroplastic of Physcomitrium patens (Spreading-leaved earth moss).